Consider the following 258-residue polypeptide: 3-deoxy-manno-octulosonate cytidylyltransferase (258 aa).

It belongs to the KdsB family.

The protein resides in the cytoplasm. The catalysed reaction is 3-deoxy-alpha-D-manno-oct-2-ulosonate + CTP = CMP-3-deoxy-beta-D-manno-octulosonate + diphosphate. The protein operates within nucleotide-sugar biosynthesis; CMP-3-deoxy-D-manno-octulosonate biosynthesis; CMP-3-deoxy-D-manno-octulosonate from 3-deoxy-D-manno-octulosonate and CTP: step 1/1. It functions in the pathway bacterial outer membrane biogenesis; lipopolysaccharide biosynthesis. Functionally, activates KDO (a required 8-carbon sugar) for incorporation into bacterial lipopolysaccharide in Gram-negative bacteria. This Gemmatimonas aurantiaca (strain DSM 14586 / JCM 11422 / NBRC 100505 / T-27) protein is 3-deoxy-manno-octulosonate cytidylyltransferase.